Here is a 765-residue protein sequence, read N- to C-terminus: Amyloid beta precursor like protein 2 (765 aa).

The signal sequence occupies residues 1–31 (MAATGTAAAAATGKLLVLLLLGLTAPAAALA). Residues 32–695 (GYIEALAANA…LREDFSLSSS (664 aa)) are Extracellular-facing. Positions 46–139 (AVAEPQIAMF…PFKCLVGEFV (94 aa)) are GFLD subdomain. In terms of domain architecture, E1 spans 46–205 (AVAEPQIAMF…HGTEYVCCPQ (160 aa)). 6 disulfide bridges follow: C56/C80, C91/C133, C116/C123, C149/C203, C160/C190, and C174/C202. A cuBD subdomain region spans residues 147 to 205 (ENCQFFHQERMEVCEKHQRWHTVVKEACLTEGMTLYSYGMLLPCGVDQFHGTEYVCCPQ). Cu cation contacts are provided by H163, H167, and Y184. The interval 211–301 (SDSTMSKEEE…EPSSDGTISD (91 aa)) is disordered. The residue at position 216 (S216) is a Phosphoserine. Acidic residues-rich tracts occupy residues 218–231 (EEEE…EEDY) and 240–271 (TEAD…EVVE). Basic and acidic residues predominate over residues 272–284 (DRDYYYDSFKGDD). The region spanning 308–366 (VKAVCSQEAMTGPCRAVMPRWYFDLSKGKCVRFIYGGCGGNRNNFESEDYCMAVCKTMI) is the BPTI/Kunitz inhibitor domain. Disulfide bonds link C312–C362, C321–C345, and C337–C358. An E2 domain is found at 375–566 (DVDVYFETSA…QEIQEEIDEL (192 aa)). S592 carries the post-translational modification Phosphoserine. The interval 597–616 (EIPPFHPFHPFPSLSENEDT) is disordered. S628 carries an O-linked (Xyl...) (chondroitin sulfate) serine glycan. A helical membrane pass occupies residues 696 to 718 (ALIGLLVIAVAIATVIVISLVML). Topologically, residues 719-765 (RKRQYGTISHGIVEVHPMLTPEERHLNKMQNHGYENPTYKYLEQMQI) are cytoplasmic. The segment at 751-765 (GYENPTYKYLEQMQI) is interaction with DAB2. Positions 752–757 (YENPTY) match the NPXY motif motif.

It belongs to the APP family. As to quaternary structure, interacts with CPEB1. Interacts (via NPXY motif) with DAB2 (via PID domain); the interaction is impaired by tyrosine phosphorylation of the NPXY motif. Interacts (via cytoplasmic domain) with APBB2/FE65L. Interacts (via intracellular domain) with APBB3/FE65L2.

It is found in the membrane. Its function is as follows. May play a role in the regulation of hemostasis. The soluble form may have inhibitory properties towards coagulation factors. May interact with cellular G-protein signaling pathways. May bind to the DNA 5'-GTCACATG-3'(CDEI box). Inhibits trypsin, chymotrypsin, plasmin, factor XIA and plasma and glandular kallikrein. Modulates the Cu/Zn nitric oxide-catalyzed autodegradation of GPC1 heparan sulfate side chains in fibroblasts. The protein is Amyloid beta precursor like protein 2 of Rattus norvegicus (Rat).